The sequence spans 61 residues: Large ribosomal subunit protein uL30 (61 aa).

Belongs to the universal ribosomal protein uL30 family. In terms of assembly, part of the 50S ribosomal subunit.

This chain is Large ribosomal subunit protein uL30, found in Latilactobacillus sakei subsp. sakei (strain 23K) (Lactobacillus sakei subsp. sakei).